The sequence spans 1066 residues: Ubiquitin conjugation factor E4 A (1066 aa).

The tract at residues 33-57 (KEQLKQQSDELPASPDDSDNSVSES) is disordered. Lys386 bears the N6-acetyllysine mark. Residues 987–1061 (DACDEFLDPI…QRWLAERKQQ (75 aa)) enclose the U-box domain.

Belongs to the ubiquitin conjugation factor E4 family.

It is found in the cytoplasm. It catalyses the reaction S-ubiquitinyl-[E2 ubiquitin-conjugating enzyme]-L-cysteine + [acceptor protein]-L-lysine = [E2 ubiquitin-conjugating enzyme]-L-cysteine + N(6)-ubiquitinyl-[acceptor protein]-L-lysine.. The protein operates within protein modification; protein ubiquitination. Functionally, ubiquitin-protein ligase that probably functions as an E3 ligase in conjunction with specific E1 and E2 ligases. May also function as an E4 ligase mediating the assembly of polyubiquitin chains on substrates ubiquitinated by another E3 ubiquitin ligase. Mediates 'Lys-48'-linked polyubiquitination of substrates. This is Ubiquitin conjugation factor E4 A from Pongo abelii (Sumatran orangutan).